A 343-amino-acid polypeptide reads, in one-letter code: Probable magnesium transporter NIPA4 (343 aa).

Over 1-18 (MAESSGSWRDSYKGMSSD) the chain is Extracellular. A helical transmembrane segment spans residues 19 to 39 (NIKGLVLALSSSLFIGASFIV). The Cytoplasmic portion of the chain corresponds to 40-66 (KKKGLKKAASTGTRAGVGGYSYLYEPL). Residues 67 to 87 (WWIGMTTMLLGEIANFAAYAF) form a helical membrane-spanning segment. Residues 88–90 (APA) lie on the Extracellular side of the membrane. Residues 91 to 111 (ILVTPLGAVSIIISAVLAHII) form a helical membrane-spanning segment. Residues 112–115 (LREK) lie on the Cytoplasmic side of the membrane. Residues 116 to 136 (LHIFGILGCALCVVGSTTIVL) traverse the membrane as a helical segment. Topologically, residues 137–157 (HAPQEREIDSVIEVWNLATEP) are extracellular. A helical membrane pass occupies residues 158-178 (AFMFYASLVIGAAVFLIIRFV). The Cytoplasmic portion of the chain corresponds to 179-189 (PQYGQTNVMVY). Residues 190–210 (IGICSLVGSLSVMSVKALGIA) traverse the membrane as a helical segment. Residues 211–220 (LKLTFSGTNQ) are Extracellular-facing. Residues 221-241 (LFYPQTWIFTLVVLTCVVTQL) traverse the membrane as a helical segment. Over 242–254 (NYLNKALDTFNTA) the chain is Cytoplasmic. A helical transmembrane segment spans residues 255 to 275 (IVSPIYYVMFTSLTILASVIM). Over 276–283 (FKDWDRQN) the chain is Extracellular. A helical transmembrane segment spans residues 284 to 304 (GTQIVTEICGFVTILSGTFLL). The Cytoplasmic segment spans residues 305–343 (HRTKDMVEGSSVILPLRISKHINEEEGIPLRRQESLRSP).

This sequence belongs to the NIPA (TC 2.A.7) family. As to quaternary structure, homodimer.

It localises to the cell membrane. Its subcellular location is the early endosome. Its function is as follows. Acts as a Mg(2+) transporter. Can also transport other divalent cations such as Fe(2+), Sr(2+), Ba(2+), Mn(2+) and Co(2+) but to a much less extent than Mg(2+). This Arabidopsis thaliana (Mouse-ear cress) protein is Probable magnesium transporter NIPA4.